A 408-amino-acid polypeptide reads, in one-letter code: Probable acyl-CoA dehydrogenase 6 (408 aa).

The Proton acceptor role is filled by E265.

This sequence belongs to the acyl-CoA dehydrogenase family. Homotetramer. It depends on FAD as a cofactor.

The enzyme catalyses 3-methylbutanoyl-CoA + oxidized [electron-transfer flavoprotein] + H(+) = 3-methylbut-2-enoyl-CoA + reduced [electron-transfer flavoprotein]. It functions in the pathway amino-acid degradation; L-leucine degradation; (S)-3-hydroxy-3-methylglutaryl-CoA from 3-isovaleryl-CoA: step 1/3. The polypeptide is Probable acyl-CoA dehydrogenase 6 (acdh-6) (Caenorhabditis elegans).